A 181-amino-acid chain; its full sequence is uncharacterized protein (181 aa).

This is an uncharacterized protein from Acanthamoeba polyphaga (Amoeba).